The following is a 105-amino-acid chain: Replication restart protein PriB (105 aa).

The SSB domain maps to 1 to 102 (MTTNRLVLSG…LHAEQIELID (102 aa)).

The protein belongs to the PriB family. As to quaternary structure, homodimer. Interacts with PriA and DnaT. Component of the replication restart primosome. Primosome assembly occurs via a 'hand-off' mechanism. PriA binds to replication forks, subsequently PriB then DnaT bind; DnaT then displaces ssDNA to generate the helicase loading substrate.

In terms of biological role, involved in the restart of stalled replication forks, which reloads the replicative helicase on sites other than the origin of replication; the PriA-PriB pathway is the major replication restart pathway. During primosome assembly it facilitates complex formation between PriA and DnaT on DNA; stabilizes PriA on DNA. Stimulates the DNA unwinding activity of PriA helicase. In Photorhabdus laumondii subsp. laumondii (strain DSM 15139 / CIP 105565 / TT01) (Photorhabdus luminescens subsp. laumondii), this protein is Replication restart protein PriB.